The primary structure comprises 495 residues: UDP-N-acetylmuramoyl-L-alanyl-D-glutamate--2,6-diaminopimelate ligase (495 aa).

UDP-N-acetyl-alpha-D-muramoyl-L-alanyl-D-glutamate-binding positions include Leu-27, Ser-29, and 44–46; that span reads HQA. 116–122 is an ATP binding site; sequence GTNGKTT. UDP-N-acetyl-alpha-D-muramoyl-L-alanyl-D-glutamate is bound by residues Asn-157, 158–159, Ser-185, Gln-191, and Arg-193; that span reads TT. N6-carboxylysine is present on Lys-225. Residues Arg-390, 414–417, Gly-465, and Glu-469 contribute to the meso-2,6-diaminopimelate site; that span reads DNPR. A Meso-diaminopimelate recognition motif motif is present at residues 414 to 417; it reads DNPR.

The protein belongs to the MurCDEF family. MurE subfamily. Mg(2+) is required as a cofactor. In terms of processing, carboxylation is probably crucial for Mg(2+) binding and, consequently, for the gamma-phosphate positioning of ATP.

The protein resides in the cytoplasm. The catalysed reaction is UDP-N-acetyl-alpha-D-muramoyl-L-alanyl-D-glutamate + meso-2,6-diaminopimelate + ATP = UDP-N-acetyl-alpha-D-muramoyl-L-alanyl-gamma-D-glutamyl-meso-2,6-diaminopimelate + ADP + phosphate + H(+). It participates in cell wall biogenesis; peptidoglycan biosynthesis. Its function is as follows. Catalyzes the addition of meso-diaminopimelic acid to the nucleotide precursor UDP-N-acetylmuramoyl-L-alanyl-D-glutamate (UMAG) in the biosynthesis of bacterial cell-wall peptidoglycan. This is UDP-N-acetylmuramoyl-L-alanyl-D-glutamate--2,6-diaminopimelate ligase from Salmonella paratyphi A (strain ATCC 9150 / SARB42).